A 286-amino-acid polypeptide reads, in one-letter code: Mycolic acid methyltransferase MmaA1 (286 aa).

Residues 32–33 (YT), 71–73 (GCG), 93–98 (TLSRNH), and 122–123 (WE) each bind S-adenosyl-L-methionine. C268 is a catalytic residue.

It belongs to the CFA/CMAS family.

It functions in the pathway lipid metabolism; mycolic acid biosynthesis. Involved in the conversion of a cis-olefin into a trans-olefin with concomitant introduction of an allylic methyl branch at the proximal position of the precursor to both the methoxy and ketomycolic acids. It directly affects the cis- to trans ratio and indirectly affects the keto to methoxy ratio. This is Mycolic acid methyltransferase MmaA1 (cmaD) from Mycobacterium bovis (strain ATCC BAA-935 / AF2122/97).